The sequence spans 156 residues: Cell division protein SepF (156 aa).

It belongs to the SepF family. Homodimer. Interacts with FtsZ.

The protein localises to the cytoplasm. Its function is as follows. Cell division protein that is part of the divisome complex and is recruited early to the Z-ring. Probably stimulates Z-ring formation, perhaps through the cross-linking of FtsZ protofilaments. Its function overlaps with FtsA. The protein is Cell division protein SepF of Bacillus cytotoxicus (strain DSM 22905 / CIP 110041 / 391-98 / NVH 391-98).